Consider the following 105-residue polypeptide: DNA-directed RNA polymerase RPB9 homolog (105 aa).

Zn(2+) contacts are provided by Cys-4, Cys-7, Cys-24, Cys-26, Cys-73, Cys-76, and Cys-96. The C4-type; atypical zinc finger occupies 4 to 26 (CKACSSCMVRTYVDGNIIFRCSC).

It belongs to the Asfivirus DNA-directed RNA polymerase RPB9 homolog family. In terms of assembly, part of the viral DNA-directed RNA polymerase that consists of 8 polII-like subunits (RPB1, RPB2, RPB3, RPB5, RPB6, RPB7, RPB9, RPB10), a capping enzyme and a termination factor.

It is found in the host cytoplasm. Functionally, component of the DNA-directed RNA polymerase (RNAP) that catalyzes the transcription in the cytoplasm of viral DNA into RNA using the four ribonucleoside triphosphates as substrates. The protein is DNA-directed RNA polymerase RPB9 homolog of African swine fever virus (isolate Pig/Kenya/KEN-50/1950) (ASFV).